Here is a 466-residue protein sequence, read N- to C-terminus: Adenosylhomocysteinase (466 aa).

Residues threonine 57, aspartate 132, and glutamate 192 each coordinate substrate. 193-195 contributes to the NAD(+) binding site; the sequence is TTT. 2 residues coordinate substrate: lysine 222 and aspartate 226. NAD(+) is bound by residues asparagine 227, 256 to 261, glutamate 279, asparagine 314, 335 to 337, and asparagine 380; these read GYGDVG and IGH.

The protein belongs to the adenosylhomocysteinase family. It depends on NAD(+) as a cofactor.

It localises to the cytoplasm. It catalyses the reaction S-adenosyl-L-homocysteine + H2O = L-homocysteine + adenosine. The protein operates within amino-acid biosynthesis; L-homocysteine biosynthesis; L-homocysteine from S-adenosyl-L-homocysteine: step 1/1. Its function is as follows. May play a key role in the regulation of the intracellular concentration of adenosylhomocysteine. The polypeptide is Adenosylhomocysteinase (Brucella anthropi (strain ATCC 49188 / DSM 6882 / CCUG 24695 / JCM 21032 / LMG 3331 / NBRC 15819 / NCTC 12168 / Alc 37) (Ochrobactrum anthropi)).